Here is a 794-residue protein sequence, read N- to C-terminus: ALG-2 interacting protein X (794 aa).

The BRO1 domain occupies 1-385; that stretch reads MLSIERKRTE…DNIEFHNQSA (385 aa). 2 coiled-coil regions span residues 499 to 568 and 600 to 655; these read SFIR…LCKK and LNES…NLDE. Residues 695–794 form a disordered region; that stretch reads GVNPHSPLTS…PPYNSNNKHY (100 aa). A compositionally biased stretch (low complexity) spans 698-712; it reads PHSPLTSPSPSLQSP. Over residues 713-722 the composition is skewed to polar residues; sequence VNNYPNQFSS. Composition is skewed to low complexity over residues 723–742 and 749–764; these read PQYH…YVPS and YSYN…QFGG. Residues 765-787 are compositionally biased toward pro residues; sequence PLPPPQSFSAPPPPQSFTAPPPY.

Self-associates; the interaction is calcium-independent Interacts with pefa; the interaction is calcium-dependent. Interacts with pefb; the interaction is calcium-dependent.

The protein localises to the cytoplasm. It is found in the cytoplasmic vesicle membrane. It localises to the endosome. In terms of biological role, unknown. Required for development but not for cell death. The sequence is that of ALG-2 interacting protein X (alxA) from Dictyostelium discoideum (Social amoeba).